The chain runs to 160 residues: Cyclic pyranopterin monophosphate synthase (160 aa).

Substrate is bound by residues 75-77 and 113-114; these read LCH and ME. Asp128 is a catalytic residue.

This sequence belongs to the MoaC family. As to quaternary structure, homohexamer; trimer of dimers.

The enzyme catalyses (8S)-3',8-cyclo-7,8-dihydroguanosine 5'-triphosphate = cyclic pyranopterin phosphate + diphosphate. The protein operates within cofactor biosynthesis; molybdopterin biosynthesis. Functionally, catalyzes the conversion of (8S)-3',8-cyclo-7,8-dihydroguanosine 5'-triphosphate to cyclic pyranopterin monophosphate (cPMP). This chain is Cyclic pyranopterin monophosphate synthase, found in Haemophilus influenzae (strain PittEE).